The chain runs to 75 residues: UPF0352 protein ESA_01049 (75 aa).

It belongs to the UPF0352 family.

This is UPF0352 protein ESA_01049 from Cronobacter sakazakii (strain ATCC BAA-894) (Enterobacter sakazakii).